The chain runs to 95 residues: DNA-directed RNA polymerase subunit omega (95 aa).

The protein belongs to the RNA polymerase subunit omega family. In terms of assembly, the RNAP catalytic core consists of 2 alpha, 1 beta, 1 beta' and 1 omega subunit. When a sigma factor is associated with the core the holoenzyme is formed, which can initiate transcription.

It carries out the reaction RNA(n) + a ribonucleoside 5'-triphosphate = RNA(n+1) + diphosphate. Functionally, promotes RNA polymerase assembly. Latches the N- and C-terminal regions of the beta' subunit thereby facilitating its interaction with the beta and alpha subunits. This Colwellia psychrerythraea (strain 34H / ATCC BAA-681) (Vibrio psychroerythus) protein is DNA-directed RNA polymerase subunit omega.